We begin with the raw amino-acid sequence, 220 residues long: MKLNKYIDHTLLKQDAKKKQIDSLLSEAREYGFASVCVNPTWVEHAKKGLEGTDVKVCTVVGFPLGATTSAVKAFETKEAIQNGADEIDMVINVGALKSGNLALVESDIRAVVEASGDKLVKVIIEACLLTDQEKVVVCQLAQKAGADFVKTSTGFSTGGATIADVTLMRETVGSDMGVKAAGGARSYADALAFVEAGATRIGTSAGVAILKGELADGDY.

Catalysis depends on D89, which acts as the Proton donor/acceptor. Catalysis depends on K151, which acts as the Schiff-base intermediate with acetaldehyde. Catalysis depends on K180, which acts as the Proton donor/acceptor.

It belongs to the DeoC/FbaB aldolase family. DeoC type 1 subfamily.

Its subcellular location is the cytoplasm. The enzyme catalyses 2-deoxy-D-ribose 5-phosphate = D-glyceraldehyde 3-phosphate + acetaldehyde. It functions in the pathway carbohydrate degradation; 2-deoxy-D-ribose 1-phosphate degradation; D-glyceraldehyde 3-phosphate and acetaldehyde from 2-deoxy-alpha-D-ribose 1-phosphate: step 2/2. In terms of biological role, catalyzes a reversible aldol reaction between acetaldehyde and D-glyceraldehyde 3-phosphate to generate 2-deoxy-D-ribose 5-phosphate. The chain is Deoxyribose-phosphate aldolase from Streptococcus pneumoniae (strain CGSP14).